The primary structure comprises 498 residues: ATP synthase subunit beta, chloroplastic (498 aa).

172–179 contributes to the ATP binding site; sequence GGAGVGKT.

It belongs to the ATPase alpha/beta chains family. As to quaternary structure, F-type ATPases have 2 components, CF(1) - the catalytic core - and CF(0) - the membrane proton channel. CF(1) has five subunits: alpha(3), beta(3), gamma(1), delta(1), epsilon(1). CF(0) has four main subunits: a(1), b(1), b'(1) and c(9-12).

It is found in the plastid. The protein localises to the chloroplast thylakoid membrane. The enzyme catalyses ATP + H2O + 4 H(+)(in) = ADP + phosphate + 5 H(+)(out). Functionally, produces ATP from ADP in the presence of a proton gradient across the membrane. The catalytic sites are hosted primarily by the beta subunits. This Oenothera biennis (German evening primrose) protein is ATP synthase subunit beta, chloroplastic.